The primary structure comprises 478 residues: Zinc finger and SCAN domain-containing protein 26 (478 aa).

Lys-17 is covalently cross-linked (Glycyl lysine isopeptide (Lys-Gly) (interchain with G-Cter in SUMO2)). Positions 51-133 (CKQFRQLRYE…VVLEDLQLDL (83 aa)) constitute an SCAN box domain. Disordered stretches follow at residues 159-181 (GVQE…KGEE) and 200-226 (ESSG…AKPK). Composition is skewed to basic and acidic residues over residues 164–181 (QVRH…KGEE) and 207–226 (EPME…AKPK). A C2H2-type 1; degenerate zinc finger spans residues 231 to 253 (YKCSEREQRFIQHLDLIEHASTH). 7 consecutive C2H2-type zinc fingers follow at residues 282-304 (HQCH…QKIH), 310-332 (YQCN…LRIH), 338-360 (YLCI…QRIH), 366-388 (CECK…QRIH), 394-416 (HQCN…HRIH), 422-444 (FKCN…VRIH), and 450-472 (YQCS…QRYH).

Its subcellular location is the nucleus. Functionally, may be involved in transcriptional regulation. The chain is Zinc finger and SCAN domain-containing protein 26 (ZSCAN26) from Homo sapiens (Human).